A 104-amino-acid chain; its full sequence is Large ribosomal subunit protein uL24 (104 aa).

Residues 82–92 are compositionally biased toward basic and acidic residues; that stretch reads RIGYRTDENGK. Residues 82–104 are disordered; it reads RIGYRTDENGKRVRISRRNGKDI. Basic residues predominate over residues 93–104; sequence RVRISRRNGKDI.

This sequence belongs to the universal ribosomal protein uL24 family. In terms of assembly, part of the 50S ribosomal subunit.

In terms of biological role, one of two assembly initiator proteins, it binds directly to the 5'-end of the 23S rRNA, where it nucleates assembly of the 50S subunit. One of the proteins that surrounds the polypeptide exit tunnel on the outside of the subunit. The sequence is that of Large ribosomal subunit protein uL24 from Nocardia farcinica (strain IFM 10152).